We begin with the raw amino-acid sequence, 603 residues long: MSGISELSGVTILYGSETGNAQDYALFLAKRLKYFGLKPSVVSLDHYPLKNLVTDTKYLIVICSTTGQGELPRNSKKFMKFILKKKLPTDLLNHIELTTFGIGDSSYPKFNYAIKKIHARLLQLGCSELCTRCEADEQTPEGVDGYYSEWETNLLEALKSKIHGIPLTYDETVLLPADNPVEVSSNESDVPTSNSPTELSLTRMGDGSTNLLLGSVKANKRITKEGHFQDVRHLIIEGENLSYIPGDTLALYPSNDNESVETLIQSQPHWIPIADKPLLIHGEIPFVEGGLIDKSKLTLRSLITHHLDIISIPRRSFFMTLAHFSDSTTEDGEREQEKLREFSKIEESEELYNYANRPRRSILETILEFQQNLTIPVEYILDLFPIIKPRLFSIASRPSPNSVELIVAVVVYKTILRRVRRGLCTKWIKSLQDNDRIVFSIHKSNLKFELPTTKYPPILMVSPGTGVAPMKSLIEHITSLGIQQHLYLFYGCRNKENDYLFGDLWASLKSQNKLSIYPCFSRDQDSKIKYVQHKIYEQHELVGDLILNQNAIVFICGSSGAMPREVRITLVEILMKFGKMKDTEADDYLMDMENGGRYLQETW.

In terms of domain architecture, Flavodoxin-like spans 10–155 (VTILYGSETG…YYSEWETNLL (146 aa)). FMN is bound by residues 16-21 (SETGNA), 64-67 (STTG), 102-111 (IGDSSYPKFN), and Glu137. An FAD-binding FR-type domain is found at 209–451 (TNLLLGSVKA…HKSNLKFELP (243 aa)). FAD contacts are provided by residues Arg359, 390–393 (RLFS), and 422–425 (GLCT). NADP(+)-binding positions include Thr465 and 521–522 (SR). Trp603 contributes to the FAD binding site.

This sequence belongs to the NADPH-dependent diflavin oxidoreductase NDOR1 family. It in the N-terminal section; belongs to the flavodoxin family. The protein in the C-terminal section; belongs to the flavoprotein pyridine nucleotide cytochrome reductase family. In terms of assembly, interacts with DRE2; as part of the cytosolic iron-sulfur (Fe-S) protein assembly (CIA) machinery. Requires FAD as cofactor. The cofactor is FMN.

It localises to the cytoplasm. The protein localises to the mitochondrion. The catalysed reaction is 2 oxidized [2Fe-2S]-[protein] + NADPH = 2 reduced [2Fe-2S]-[protein] + NADP(+) + H(+). NADPH-dependent reductase which is a central component of the cytosolic iron-sulfur (Fe-S) protein assembly (CIA) machinery. Transfers electrons from NADPH via its FAD and FMN prosthetic groups to the [2Fe-2S] cluster of DRE2, another key component of the CIA machinery. In turn, this reduced cluster provides electrons for assembly of cytosolic iron-sulfur cluster proteins. Positively controls H(2)O(2)-induced cell death. The chain is NADPH-dependent diflavin oxidoreductase 1 from Debaryomyces hansenii (strain ATCC 36239 / CBS 767 / BCRC 21394 / JCM 1990 / NBRC 0083 / IGC 2968) (Yeast).